A 200-amino-acid chain; its full sequence is MFIGITQRLICNDSYHEKRECLALDWGKLFNKDLFKNFTPLPLSYEIDFSYYKHLIKAVILSGGNDLSFYSPNVLSKKRDLYEKQVIEICLEEKIPLLGICRGAQMIAHYFNSHISPCENHIGKHEVFFSKEKFISNSFHNFAIEKLGEDLVELCLAKDNTIEAFKHKYENIFGIMWHIERENGLNNIQILKEWFSLIKE.

The 181-residue stretch at 20–200 (ECLALDWGKL…LKEWFSLIKE (181 aa)) folds into the Glutamine amidotransferase type-1 domain. Residue C101 is the Nucleophile of the active site. Active-site residues include H178 and E180.

It catalyses the reaction N(5)-(cytidine 5'-diphosphoramidyl)-L-glutamine + H2O = cytidine 5'-diphosphoramidate + L-glutamate + H(+). Its pathway is capsule biogenesis; capsule polysaccharide biosynthesis. Functionally, involved in the biosynthesis of the O-methyl phosphoramidate (MeOPN) group found on the capsular polysaccharide (CPS) of C.jejuni. Catalyzes the hydrolysis of CDP-L-glutamine to L-glutamate and cytidine diphosphoramidate. The polypeptide is Gamma-glutamyl-CDP-amidate hydrolase (Campylobacter jejuni subsp. jejuni serotype O:2 (strain ATCC 700819 / NCTC 11168)).